The chain runs to 754 residues: Peptidyl-prolyl cis-trans isomerase G (754 aa).

The region spanning 11–176 (FFDIAINNQP…AEVRILSCGE (166 aa)) is the PPIase cyclophilin-type domain. Positions 182–193 (KVKKEEKKRHKS) are enriched in basic residues. The segment at 182–754 (KVKKEEKKRH…SPGTDEDKSG (573 aa)) is disordered. Positions 194–216 (SSSSSSSSSDSDSSSDSQSSSDS) are enriched in low complexity. Positions 228–253 (KKRKKKHRKNSRKHKKEKKKRKKSKK) are enriched in basic residues. 5 positions are modified to phosphoserine: Ser254, Ser256, Ser257, Ser259, and Ser290. Residues 292-310 (PKADEKERKNREREREREC) are compositionally biased toward basic and acidic residues. Phosphoserine is present on Ser315. Over residues 329 to 347 (SGRKIKGRGPRRYRTPSRS) the composition is skewed to basic residues. Composition is skewed to basic and acidic residues over residues 348 to 368 (RSRD…EMQR) and 379 to 449 (RWIK…DKYK). Ser356 carries the post-translational modification Phosphoserine. Thr358 carries the phosphothreonine modification. Ser386 carries the post-translational modification Phosphoserine. Residue Lys392 forms a Glycyl lysine isopeptide (Lys-Gly) (interchain with G-Cter in SUMO2) linkage. Residues Ser397, Ser413, and Ser415 each carry the phosphoserine modification. The segment covering 450 to 462 (NKVKKRAKSKSRS) has biased composition (basic residues). 2 stretches are compositionally biased toward basic and acidic residues: residues 463–553 (KSKE…DITK) and 578–599 (RTHD…QEYR). The segment covering 616–627 (SRSKDRRRRRRD) has biased composition (basic residues). Residues 628–686 (SRSSEREESQSRNKDKYRNQESKSSHRKENSESEKRMYSKSRDHNSSNNSREKKADRDQ) show a composition bias toward basic and acidic residues. A phosphoserine mark is found at Ser687 and Ser690. Positions 687-698 (SPFSKIKQSSQD) are enriched in polar residues. Lys693 participates in a covalent cross-link: Glycyl lysine isopeptide (Lys-Gly) (interchain with G-Cter in SUMO2). 3 positions are modified to phosphoserine: Ser696, Ser744, and Ser745. Residues 707 to 754 (KNKEDEKIRSSVEKENQKSKGQENDHVHEKNKKFDHESSPGTDEDKSG) show a composition bias toward basic and acidic residues. Residue Thr748 is modified to Phosphothreonine. Ser753 carries the phosphoserine modification.

In terms of assembly, interacts with CLK1, PNN and with the phosphorylated C-terminal domain of RNA polymerase II. As to expression, ubiquitous.

The protein resides in the nucleus matrix. It is found in the nucleus speckle. It carries out the reaction [protein]-peptidylproline (omega=180) = [protein]-peptidylproline (omega=0). Its activity is regulated as follows. Inhibited by cyclosporin A (CsA). In terms of biological role, PPIase that catalyzes the cis-trans isomerization of proline imidic peptide bonds in oligopeptides and may therefore assist protein folding. May be implicated in the folding, transport, and assembly of proteins. May play an important role in the regulation of pre-mRNA splicing. The chain is Peptidyl-prolyl cis-trans isomerase G (PPIG) from Homo sapiens (Human).